The sequence spans 164 residues: MAPEKSLERATFGAGCFWGVEEAFRRVPGVVETAVGFMGGTVENPTYPEVCTGRTGHAEVVQVTYDPGTVSYRALLDTFWDAHDPTTPNRQGPDIGTQYRSVIFVHTPEQEAEARASKEEMDQSGKFRRPIVTAIEPAGTFWRAEEYHQQYFAKRGGGQCRTVW.

The active site involves cysteine 16.

This sequence belongs to the MsrA Met sulfoxide reductase family.

It carries out the reaction L-methionyl-[protein] + [thioredoxin]-disulfide + H2O = L-methionyl-(S)-S-oxide-[protein] + [thioredoxin]-dithiol. The enzyme catalyses [thioredoxin]-disulfide + L-methionine + H2O = L-methionine (S)-S-oxide + [thioredoxin]-dithiol. Has an important function as a repair enzyme for proteins that have been inactivated by oxidation. Catalyzes the reversible oxidation-reduction of methionine sulfoxide in proteins to methionine. The chain is Peptide methionine sulfoxide reductase MsrA from Methanoculleus marisnigri (strain ATCC 35101 / DSM 1498 / JR1).